Consider the following 609-residue polypeptide: Replication protein E1 (609 aa).

A Nuclear localization signal motif is present at residues Lys-81–Lys-83. 2 positions are modified to phosphoserine; by host: Ser-87 and Ser-94. The Nuclear export signal motif lies at Leu-93–Ile-102. The tract at residues Gln-149–Ala-312 is DNA-binding region. The 151-residue stretch at Ile-411–Gln-561 folds into the SF3 helicase domain. Residue Gly-437–Ser-444 participates in ATP binding. Residue Lys-518 forms a Glycyl lysine isopeptide (Lys-Gly) (interchain with G-Cter in SUMO) linkage. Residues Asp-584–Leu-609 are disordered.

Belongs to the papillomaviridae E1 protein family. In terms of assembly, can form hexamers. Interacts with E2 protein; this interaction increases E1 DNA binding specificity. Interacts with host DNA polymerase subunit POLA2. Interacts with host single stranded DNA-binding protein RPA1. Interacts with host TOP1; this interaction stimulates the enzymatic activity of TOP1. Post-translationally, phosphorylated. In terms of processing, sumoylated.

Its subcellular location is the host nucleus. It carries out the reaction Couples ATP hydrolysis with the unwinding of duplex DNA by translocating in the 3'-5' direction.. It catalyses the reaction ATP + H2O = ADP + phosphate + H(+). Its function is as follows. ATP-dependent DNA 3'-5' helicase required for initiation of viral DNA replication. It forms a complex with the viral E2 protein. The E1-E2 complex binds to the replication origin which contains binding sites for both proteins. During the initial step, a dimer of E1 interacts with a dimer of protein E2 leading to a complex that binds the viral origin of replication with high specificity. Then, a second dimer of E1 displaces the E2 dimer in an ATP-dependent manner to form the E1 tetramer. Following this, two E1 monomers are added to each half of the site, which results in the formation of two E1 trimers on the viral ori. Subsequently, two hexamers will be created. The double hexamer acts as a bi-directional helicase machinery and unwinds the viral DNA and then recruits the host DNA polymerase to start replication. The sequence is that of Replication protein E1 from Human papillomavirus 37.